Here is a 257-residue protein sequence, read N- to C-terminus: Imidazole glycerol phosphate synthase subunit HisF (257 aa).

Residues Asp12 and Asp131 contribute to the active site.

Belongs to the HisA/HisF family. In terms of assembly, heterodimer of HisH and HisF.

It is found in the cytoplasm. The catalysed reaction is 5-[(5-phospho-1-deoxy-D-ribulos-1-ylimino)methylamino]-1-(5-phospho-beta-D-ribosyl)imidazole-4-carboxamide + L-glutamine = D-erythro-1-(imidazol-4-yl)glycerol 3-phosphate + 5-amino-1-(5-phospho-beta-D-ribosyl)imidazole-4-carboxamide + L-glutamate + H(+). The protein operates within amino-acid biosynthesis; L-histidine biosynthesis; L-histidine from 5-phospho-alpha-D-ribose 1-diphosphate: step 5/9. Functionally, IGPS catalyzes the conversion of PRFAR and glutamine to IGP, AICAR and glutamate. The HisF subunit catalyzes the cyclization activity that produces IGP and AICAR from PRFAR using the ammonia provided by the HisH subunit. This chain is Imidazole glycerol phosphate synthase subunit HisF, found in Saccharophagus degradans (strain 2-40 / ATCC 43961 / DSM 17024).